The chain runs to 206 residues: N-(5'-phosphoribosyl)anthranilate isomerase (206 aa).

The protein belongs to the TrpF family.

The enzyme catalyses N-(5-phospho-beta-D-ribosyl)anthranilate = 1-(2-carboxyphenylamino)-1-deoxy-D-ribulose 5-phosphate. Its pathway is amino-acid biosynthesis; L-tryptophan biosynthesis; L-tryptophan from chorismate: step 3/5. The chain is N-(5'-phosphoribosyl)anthranilate isomerase from Pseudomonas syringae pv. tomato (strain ATCC BAA-871 / DC3000).